A 109-amino-acid polypeptide reads, in one-letter code: Phosphoribosyl-AMP cyclohydrolase (109 aa).

Aspartate 80 provides a ligand contact to Mg(2+). Residue cysteine 81 coordinates Zn(2+). Aspartate 82 and aspartate 84 together coordinate Mg(2+). Residues cysteine 97 and cysteine 104 each contribute to the Zn(2+) site.

It belongs to the PRA-CH family. In terms of assembly, homodimer. The cofactor is Mg(2+). It depends on Zn(2+) as a cofactor.

It localises to the cytoplasm. It carries out the reaction 1-(5-phospho-beta-D-ribosyl)-5'-AMP + H2O = 1-(5-phospho-beta-D-ribosyl)-5-[(5-phospho-beta-D-ribosylamino)methylideneamino]imidazole-4-carboxamide. It functions in the pathway amino-acid biosynthesis; L-histidine biosynthesis; L-histidine from 5-phospho-alpha-D-ribose 1-diphosphate: step 3/9. In terms of biological role, catalyzes the hydrolysis of the adenine ring of phosphoribosyl-AMP. This chain is Phosphoribosyl-AMP cyclohydrolase, found in Clostridium beijerinckii (strain ATCC 51743 / NCIMB 8052) (Clostridium acetobutylicum).